We begin with the raw amino-acid sequence, 332 residues long: ADP-L-glycero-D-manno-heptose-6-epimerase (332 aa).

NADP(+)-binding positions include 11–12 (FI), 32–33 (DN), K39, K54, 76–80 (EGACS), and N93. Catalysis depends on Y140, which acts as the Proton acceptor. Position 144 (K144) interacts with NADP(+). N170 is a substrate binding site. NADP(+) contacts are provided by V171 and K179. K179 acts as the Proton acceptor in catalysis. Residues R181, H188, 202–205 (FEGS), R215, and Y294 each bind substrate.

This sequence belongs to the NAD(P)-dependent epimerase/dehydratase family. HldD subfamily. As to quaternary structure, homopentamer. NADP(+) is required as a cofactor.

It carries out the reaction ADP-D-glycero-beta-D-manno-heptose = ADP-L-glycero-beta-D-manno-heptose. The protein operates within nucleotide-sugar biosynthesis; ADP-L-glycero-beta-D-manno-heptose biosynthesis; ADP-L-glycero-beta-D-manno-heptose from D-glycero-beta-D-manno-heptose 7-phosphate: step 4/4. Catalyzes the interconversion between ADP-D-glycero-beta-D-manno-heptose and ADP-L-glycero-beta-D-manno-heptose via an epimerization at carbon 6 of the heptose. This Dechloromonas aromatica (strain RCB) protein is ADP-L-glycero-D-manno-heptose-6-epimerase.